The primary structure comprises 294 residues: StAR-related lipid transfer protein 3 (294 aa).

The MENTAL domain occupies 1–66; sequence DGYICNNGMD…YSPPESLAGS (66 aa). An FFAT motif is present at residues 55–61; the sequence is QFYSPPE. A disordered region spans residues 58–77; that stretch reads SPPESLAGSEEDLDEEGLGR. Residues 79-292 form the START domain; sequence AVSPQEKALV…LRQRIRDLRS (214 aa).

This sequence belongs to the STARD3 family. Homodimer. In terms of processing, phosphorylated. Phosphorylation allows the tethering of two membranes that participates in the formation of ER-endosome contacts. Phosphorylation of FFAT motif drives membrane tethering between the endoplasmic reticulum and late endosomes that in turn allows the efficient transport of sterol mediated by the START domain.

It localises to the late endosome membrane. It catalyses the reaction cholesterol(in) = cholesterol(out). Functionally, sterol-binding protein that mediates cholesterol transport from the endoplasmic reticulum to endosomes. The sterol transport mechanism is triggered by phosphorylation of FFAT motif that leads to membrane tethering between the endoplasmic reticulum and late endosomes. Acts as a lipid transfer protein that redirects sterol to the endosome at the expense of the cell membrane and favors membrane formation inside endosomes. In Salvelinus fontinalis (Brook trout), this protein is StAR-related lipid transfer protein 3.